The following is a 296-amino-acid chain: Cholesterol ring-cleaving hydrolase IpdA subunit (296 aa).

It belongs to the 3-oxoacid CoA-transferase subunit A family. Heterotetramer composed of 2 IpdA subunits and 2 IpdB subunits.

It catalyses the reaction (3E)-2-(2-carboxylatoethyl)-3-methyl-6-oxocyclohex-1-ene-1-carboxyl-CoA + H2O = 6-methyl-3,7-dioxodecanedioyl-CoA. The protein operates within steroid metabolism; cholesterol degradation. Involved in the final steps of cholesterol and steroid degradation. Opens the last steroid ring of cholesterol by catalyzing the hydrolysis of (3E)-2-(2-carboxylatoethyl)-3-methyl-6-oxocyclohex-1-ene-1-carboxyl-CoA (COCHEA-CoA) to 6-methyl-3,7-dioxodecanedioyl-CoA (MeDODA-CoA). This chain is Cholesterol ring-cleaving hydrolase IpdA subunit, found in Rhodococcus jostii (strain RHA1).